Consider the following 596-residue polypeptide: Nitrite reductase (596 aa).

A signal peptide spans 1 to 29 (MRQRTPFARPGLLASAALALVLGPLAASA). Residues 30-76 (QEQVAPPKDPAAALEDHKTRTDNRYEPSLDNLAQQDVAAPGAPEGVS) are N-terminal tail. Position 46 (His46) interacts with heme c. Tyr54 and Ser57 together coordinate heme d1. Positions 77–162 (ALSDAQYNEA…ANYLLLDPAA (86 aa)) constitute a Cytochrome c domain. The heme c site is built by Cys94, Cys97, His98, Lys108, and Tyr122. Residues Trp138, Arg203, His229, Arg232, Arg245, Arg272, Tyr292, Arg420, Gln536, and Thr583 each coordinate heme d1. The tract at residues 163–596 (PPEFGMKEMR…NVYNTMTDTY (434 aa)) is D1-heme domain.

Homodimer. Requires heme c as cofactor. The cofactor is heme.

Its subcellular location is the periplasm. The catalysed reaction is nitric oxide + Fe(III)-[cytochrome c] + H2O = Fe(II)-[cytochrome c] + nitrite + 2 H(+). The enzyme catalyses A + NH4(+) + H2O = hydroxylamine + AH2 + H(+). In Paracoccus pantotrophus (Thiosphaera pantotropha), this protein is Nitrite reductase (nirS).